We begin with the raw amino-acid sequence, 198 residues long: MKLLILTCLVASAVAMPKFPFRHTELFQTQRGGSSSSSSSEERLKEENIFKFDQQKELQRKQSEKIKEIISESTEQREASSISSSEEVVPKNTEQKHIPQEDALYQQALEQLSRLIKYHQLQMEVVHAQEQFHRINEHNQAQVKEPMRVFNQLDAYPFAAWYYGPEVQYMSFLPFSSIPQPIFPEDAQNTEVMPEWVM.

An N-terminal signal peptide occupies residues 1-15 (MKLLILTCLVASAVA). Disordered stretches follow at residues 28 to 47 (QTQR…LKEE) and 71 to 97 (SEST…EQKH). Phosphoserine is present on residues Ser39, Ser80, Ser81, Ser83, Ser84, and Ser85.

This sequence belongs to the alpha-casein family. As to expression, mammary gland specific. Secreted in milk.

It localises to the secreted. Its function is as follows. Important role in the capacity of milk to transport calcium phosphate. This chain is Alpha-S1-casein (CSN1S1), found in Cavia porcellus (Guinea pig).